The sequence spans 470 residues: Aminodeoxychorismate synthase component 1 (470 aa).

Belongs to the anthranilate synthase component I family. As to quaternary structure, monomer. Heterodimer consisting of two non-identical subunits: a glutamine amidotransferase subunit (PabA) and a aminodeoxychorismate synthase subunit (PabB). Requires Mg(2+) as cofactor.

It carries out the reaction chorismate + L-glutamine = 4-amino-4-deoxychorismate + L-glutamate. It participates in cofactor biosynthesis; tetrahydrofolate biosynthesis; 4-aminobenzoate from chorismate: step 1/2. Functionally, part of a heterodimeric complex that catalyzes the two-step biosynthesis of 4-amino-4-deoxychorismate (ADC), a precursor of p-aminobenzoate (PABA) and tetrahydrofolate. In the first step, a glutamine amidotransferase (PabA) generates ammonia as a substrate that, along with chorismate, is used in the second step, catalyzed by aminodeoxychorismate synthase (PabB) to produce ADC. This Bacillus subtilis (strain 168) protein is Aminodeoxychorismate synthase component 1 (pabB).